The chain runs to 442 residues: UDP-N-acetylmuramate--L-alanine ligase (442 aa).

Residue 109 to 115 coordinates ATP; sequence GAHGKTS.

It belongs to the MurCDEF family.

It is found in the cytoplasm. The catalysed reaction is UDP-N-acetyl-alpha-D-muramate + L-alanine + ATP = UDP-N-acetyl-alpha-D-muramoyl-L-alanine + ADP + phosphate + H(+). It functions in the pathway cell wall biogenesis; peptidoglycan biosynthesis. Functionally, cell wall formation. The chain is UDP-N-acetylmuramate--L-alanine ligase from Streptococcus pyogenes serotype M28 (strain MGAS6180).